Consider the following 1108-residue polypeptide: Folliculin-interacting protein 2 (1108 aa).

Residues 38 to 456 (FGLSDIRLLV…TVMPVDHPPI (419 aa)) form the uDENN FNIP1/2-type domain. 4 disordered regions span residues 89–112 (QESSSSSGSSSSGSSSSHGFGGSL), 209–233 (RTGSNLAHSTPVDMPSRGQNEDRDS), 598–635 (SEGVNTSELGHKPEKNRCKRPEQNSEASSMGFQEAEPD), and 649–671 (QNDQEATQDCSSSPPSCEVPRVR). Over residues 91 to 106 (SSSSSGSSSSGSSSSH) the composition is skewed to low complexity. Ser-212 and Ser-217 each carry phosphoserine. Residues 464 to 1034 (TSQSVNMLAK…VSSLLQSILQ (571 aa)) form the cDENN FNIP1/2-type domain. Positions 540 to 905 (DDQVINGSKI…DEACVLALLE (366 aa)) are interaction with PRKAA1. Basic and acidic residues predominate over residues 606–620 (LGHKPEKNRCKRPEQ). Over residues 652–663 (QEATQDCSSSPP) the composition is skewed to polar residues. A phosphoserine mark is found at Ser-720, Ser-721, and Ser-723. Residues 1044–1099 (FCIMHLEDRLQEMYLKSKMLSEYLRGHTRVHVKELSVVLGIESNDLPLLTAIASTH) form the dDENN FNIP1/2-type domain.

Belongs to the FNIP family. As to quaternary structure, homodimer and homomultimer. Heterodimer and heteromultimer with FNIP1. Interacts (via C-terminus) with FLCN (via C-terminus). Phosphorylated FLCN is preferentially bound. Component of the lysosomal folliculin complex (LFC), composed of FLCN, FNIP1 (or FNIP2), RagA/RRAGA or RagB/RRAGB GDP-bound, RagC/RRAGC or RagD/RRAGD GTP-bound, and Ragulator. Interacts with PRKAA1, PRKAB1 and PRKAG1 subunits of 5'-AMP-activated protein kinase. Interacts with HSP70, HSP90AA1, STIP1, PTGES3, CDC37, BRAF, GCR and CDK4. In terms of processing, phosphorylated by AMPK.

It is found in the lysosome membrane. The protein resides in the cytoplasm. Its function is as follows. Binding partner of the GTPase-activating protein FLCN: involved in the cellular response to amino acid availability by regulating the non-canonical mTORC1 signaling cascade controlling the MiT/TFE factors TFEB and TFE3. Required to promote FLCN recruitment to lysosomes and interaction with Rag GTPases, leading to activation of the non-canonical mTORC1 signaling. In low-amino acid conditions, component of the lysosomal folliculin complex (LFC) on the membrane of lysosomes, which inhibits the GTPase-activating activity of FLCN, thereby inactivating mTORC1 and promoting nuclear translocation of TFEB and TFE3. Upon amino acid restimulation, disassembly of the LFC complex liberates the GTPase-activating activity of FLCN, leading to activation of mTORC1 and subsequent inactivation of TFEB and TFE3. Together with FLCN, regulates autophagy: following phosphorylation by ULK1, interacts with GABARAP and promotes autophagy. In addition to its role in mTORC1 signaling, also acts as a co-chaperone of HSP90AA1/Hsp90: inhibits the ATPase activity of HSP90AA1/Hsp90, leading to activate both kinase and non-kinase client proteins of HSP90AA1/Hsp90. Acts as a scaffold to load client protein FLCN onto HSP90AA1/Hsp90. Competes with the activating co-chaperone AHSA1 for binding to HSP90AA1, thereby providing a reciprocal regulatory mechanism for chaperoning of client proteins. May play a role in the signal transduction pathway of apoptosis induced by O6-methylguanine-mispaired lesions. The protein is Folliculin-interacting protein 2 of Mus musculus (Mouse).